Here is a 152-residue protein sequence, read N- to C-terminus: Protein eva-1 homolog A (152 aa).

The interval 1-60 (MRLPLSHSPEHVEMALLSNILAAYSFVSENPERAALYFVSGVCIGLVLTLAALVIRISCH) is necessary for the localization and biological activity. Residues 35–55 (ALYFVSGVCIGLVLTLAALVI) form a helical membrane-spanning segment. A disordered region spans residues 70–97 (KFLQDRESSSDSSDSEDGSEDTVSDLSV). Over residues 82-92 (SDSEDGSEDTV) the composition is skewed to acidic residues. At T106 the chain carries Phosphothreonine. Phosphoserine; by FAM20C is present on S114.

It belongs to the EVA1 family. As to expression, expressed in lung, kidney, liver, pancreas, placenta, but not in heart and skeletal muscle.

The protein resides in the endoplasmic reticulum membrane. It localises to the lysosome membrane. Acts as a regulator of programmed cell death, mediating both autophagy and apoptosis. In Homo sapiens (Human), this protein is Protein eva-1 homolog A (EVA1A).